The following is a 281-amino-acid chain: Putative phosphatase MPN_264 (281 aa).

Aspartate 8 serves as the catalytic Nucleophile. Aspartate 8 is a binding site for Mg(2+). Leucine 9 serves as a coordination point for phosphate. Aspartate 10 provides a ligand contact to Mg(2+). Phosphate contacts are provided by residues 44–45 (TG) and lysine 205. Mg(2+) is bound by residues aspartate 228 and serine 229. Asparagine 231 serves as a coordination point for phosphate.

The protein belongs to the HAD-like hydrolase superfamily. Cof family. It depends on Mg(2+) as a cofactor.

This is Putative phosphatase MPN_264 from Mycoplasma pneumoniae (strain ATCC 29342 / M129 / Subtype 1) (Mycoplasmoides pneumoniae).